The chain runs to 162 residues: Cytochrome B pre-mRNA-processing protein 6 (162 aa).

Serine 2 bears the N-acetylserine mark. Threonine 97 is subject to Phosphothreonine.

Its subcellular location is the mitochondrion. Its function is as follows. This protein is involved in processing of the 5' terminus and the intervening sequences of cytochrome b pre-mRNA. This chain is Cytochrome B pre-mRNA-processing protein 6 (CBP6), found in Saccharomyces cerevisiae (strain ATCC 204508 / S288c) (Baker's yeast).